Here is a 247-residue protein sequence, read N- to C-terminus: Probable dihydroorotate dehydrogenase B (NAD(+)), electron transfer subunit (247 aa).

The FAD-binding FR-type domain occupies 1-87 (MLRRVTLKET…RGPYGNGFKE (87 aa)). Residues Cys-200, Cys-205, Cys-208, and Cys-216 each contribute to the [2Fe-2S] cluster site.

It belongs to the PyrK family. In terms of assembly, heterotetramer of 2 PyrK and 2 PyrD type B subunits. It depends on [2Fe-2S] cluster as a cofactor. Requires FAD as cofactor.

Its pathway is pyrimidine metabolism; UMP biosynthesis via de novo pathway; orotate from (S)-dihydroorotate (NAD(+) route): step 1/1. In terms of biological role, responsible for channeling the electrons from the oxidation of dihydroorotate from the FMN redox center in the PyrD type B subunit to the ultimate electron acceptor NAD(+). The chain is Probable dihydroorotate dehydrogenase B (NAD(+)), electron transfer subunit from Pyrococcus horikoshii (strain ATCC 700860 / DSM 12428 / JCM 9974 / NBRC 100139 / OT-3).